The chain runs to 318 residues: Protoheme IX farnesyltransferase (318 aa).

The next 9 membrane-spanning stretches (helical) occupy residues 34–54, 55–75, 95–115, 118–138, 155–175, 182–202, 228–250, 254–273, and 287–307; these read VMSL…GQIN, PVIG…SGAL, IPAG…LSAF, IILG…TIFF, IVIG…CVTG, IVLF…LALF, IVVY…FASL, AFAT…VLRM, and FAFS…DYMI.

Belongs to the UbiA prenyltransferase family. Protoheme IX farnesyltransferase subfamily.

Its subcellular location is the cell inner membrane. It catalyses the reaction heme b + (2E,6E)-farnesyl diphosphate + H2O = Fe(II)-heme o + diphosphate. The protein operates within porphyrin-containing compound metabolism; heme O biosynthesis; heme O from protoheme: step 1/1. Its function is as follows. Converts heme B (protoheme IX) to heme O by substitution of the vinyl group on carbon 2 of heme B porphyrin ring with a hydroxyethyl farnesyl side group. This is Protoheme IX farnesyltransferase from Sinorhizobium fredii (strain NBRC 101917 / NGR234).